Consider the following 98-residue polypeptide: uncharacterized protein (98 aa).

Residues 77 to 98 (SERAGEEVPPLAVAGSDDGHDH) form a disordered region.

This sequence to M.tuberculosis Rv1991c and Rv3269.

This is an uncharacterized protein from Mycobacterium bovis (strain ATCC BAA-935 / AF2122/97).